Reading from the N-terminus, the 88-residue chain is Small ribosomal subunit protein bS20 (88 aa).

The protein belongs to the bacterial ribosomal protein bS20 family.

In terms of biological role, binds directly to 16S ribosomal RNA. This is Small ribosomal subunit protein bS20 from Methylorubrum extorquens (strain CM4 / NCIMB 13688) (Methylobacterium extorquens).